The primary structure comprises 680 residues: MLPDFTPIEKLTTQDAQQETARLQKQLVQYGTAYYEDDAPLVEDYIYDALYARLVALEEKFPQYVIPDSPTQNVGSADTKSELQKVVHPAPMLSLGDVFSLDELNDWDARTTKSLGNQAPYNLELKIDGLAVALTYVDGQLVQASTRGNGIVGEDVTANVKTIKAIPKKLTEPLTIEVRGEIYMPKASFAALNKQREADGLEPFANPRNAAAGSLRQLNVKITKSRNLAAFVYYTAEPEMLGVTTQSGALERFAELGLPTDTHNRVINKMADIADYIDEYTSERESLSYGIDGVVVKVNQLDLQFDLGNTVKIPRWAIAYKFPPEEALTIVCDIEWTVGRTGAVTPTAVMDPVLLAGTTVQRASLHNPDYLREKDIQIGDTVTLHKAGDIIPEIGQVILEKRPTDSETYQVPTICPACESNLVHIEGEVALRCINPFCSAQIQEGLTHFASRNAMNIDGMGPRVVGQLLKAGYIKDVASIYRITVEQLLTLDKFQEKSAVKLIDAINSSKENSLERLLFGLGIRMVGAKAARLIAEKFRTLSAVSEASVEDIANINGIGHTIAQSIVQYFSTPESKQLLVELASSGVNQSYLSDTVIDENSFFYGKKVVLTGKLEQSSRPAATKWLQDHGANVAGSVSVKTDLVIAGEAAGSKLDKASQLGVTVWTEQQFVDEQVKEDGK.

Residues 44–48 (DYIYD), 94–95 (SL), and glutamate 124 each bind NAD(+). Residue lysine 126 is the N6-AMP-lysine intermediate of the active site. 4 residues coordinate NAD(+): arginine 147, glutamate 181, lysine 297, and lysine 321. 4 residues coordinate Zn(2+): cysteine 415, cysteine 418, cysteine 433, and cysteine 438. In terms of domain architecture, BRCT spans 598-680 (DENSFFYGKK…VDEQVKEDGK (83 aa)).

This sequence belongs to the NAD-dependent DNA ligase family. LigA subfamily. The cofactor is Mg(2+). It depends on Mn(2+) as a cofactor.

It catalyses the reaction NAD(+) + (deoxyribonucleotide)n-3'-hydroxyl + 5'-phospho-(deoxyribonucleotide)m = (deoxyribonucleotide)n+m + AMP + beta-nicotinamide D-nucleotide.. Functionally, DNA ligase that catalyzes the formation of phosphodiester linkages between 5'-phosphoryl and 3'-hydroxyl groups in double-stranded DNA using NAD as a coenzyme and as the energy source for the reaction. It is essential for DNA replication and repair of damaged DNA. The protein is DNA ligase of Leuconostoc mesenteroides subsp. mesenteroides (strain ATCC 8293 / DSM 20343 / BCRC 11652 / CCM 1803 / JCM 6124 / NCDO 523 / NBRC 100496 / NCIMB 8023 / NCTC 12954 / NRRL B-1118 / 37Y).